Here is a 261-residue protein sequence, read N- to C-terminus: uncharacterized protein (261 aa).

E46 is an active-site residue.

Belongs to the PhzF family.

This is an uncharacterized protein from Pseudomonas aeruginosa (strain ATCC 15692 / DSM 22644 / CIP 104116 / JCM 14847 / LMG 12228 / 1C / PRS 101 / PAO1).